We begin with the raw amino-acid sequence, 747 residues long: Putative ankyrin repeat protein FPV222 (747 aa).

ANK repeat units lie at residues 38-67 (DNCT…DPNI), 103-132 (NYRN…LVNM), 136-165 (KNIT…NTNA), 169-198 (YGET…NVNV), 202-231 (DSIT…DTNA), 234-263 (LERF…NTNV), 294-323 (PCTV…NPDI), 328-357 (TSTY…YTDV), 361-393 (QQNT…SFNL), 397-426 (KGRT…DTNI), 430-460 (MSFT…DPNL), 464-493 (KEVS…DIKP), 495-524 (NECY…ELEV), and 529-559 (DHYV…DLNK).

The protein is Putative ankyrin repeat protein FPV222 of Vertebrata (FPV).